The following is a 79-amino-acid chain: U16-theraphotoxin-Cg1a (79 aa).

An N-terminal signal peptide occupies residues 1 to 19; the sequence is MRALLIIAGLALFLVVCNA. A propeptide spanning residues 20-44 is cleaved from the precursor; it reads SQVNEQRKLNEMLSVMFAVEEPQER. Intrachain disulfides connect Cys-47–Cys-62, Cys-54–Cys-67, and Cys-61–Cys-74.

This sequence belongs to the neurotoxin 10 (Hwtx-1) family. 34 (Jztx-26) subfamily. As to expression, expressed by the venom gland.

The protein localises to the secreted. Functionally, probable ion channel inhibitor. The chain is U16-theraphotoxin-Cg1a from Chilobrachys guangxiensis (Chinese earth tiger tarantula).